Consider the following 469-residue polypeptide: ATP-dependent protease ATPase subunit HslU (469 aa).

ATP is bound by residues I24 and 66–71 (GVGKTE). The interval 159-179 (LFGSMNQPDEPAEEEVDQELK) is disordered. Positions 282, 347, and 419 each coordinate ATP.

The protein belongs to the ClpX chaperone family. HslU subfamily. A double ring-shaped homohexamer of HslV is capped on each side by a ring-shaped HslU homohexamer. The assembly of the HslU/HslV complex is dependent on binding of ATP.

It is found in the cytoplasm. Functionally, ATPase subunit of a proteasome-like degradation complex; this subunit has chaperone activity. The binding of ATP and its subsequent hydrolysis by HslU are essential for unfolding of protein substrates subsequently hydrolyzed by HslV. HslU recognizes the N-terminal part of its protein substrates and unfolds these before they are guided to HslV for hydrolysis. In Listeria innocua serovar 6a (strain ATCC BAA-680 / CLIP 11262), this protein is ATP-dependent protease ATPase subunit HslU.